A 275-amino-acid polypeptide reads, in one-letter code: Light-independent protochlorophyllide reductase iron-sulfur ATP-binding protein (275 aa).

ATP is bound by residues 12-17 (GIGKST) and Lys-41. Ser-16 contacts Mg(2+). Residues Cys-97 and Cys-131 each coordinate [4Fe-4S] cluster. 182–183 (NR) lines the ATP pocket.

Belongs to the NifH/BchL/ChlL family. In terms of assembly, homodimer. Protochlorophyllide reductase is composed of three subunits; BchL, BchN and BchB. [4Fe-4S] cluster is required as a cofactor.

It carries out the reaction chlorophyllide a + oxidized 2[4Fe-4S]-[ferredoxin] + 2 ADP + 2 phosphate = protochlorophyllide a + reduced 2[4Fe-4S]-[ferredoxin] + 2 ATP + 2 H2O. The protein operates within porphyrin-containing compound metabolism; bacteriochlorophyll biosynthesis (light-independent). Component of the dark-operative protochlorophyllide reductase (DPOR) that uses Mg-ATP and reduced ferredoxin to reduce ring D of protochlorophyllide (Pchlide) to form chlorophyllide a (Chlide). This reaction is light-independent. The L component serves as a unique electron donor to the NB-component of the complex, and binds Mg-ATP. The polypeptide is Light-independent protochlorophyllide reductase iron-sulfur ATP-binding protein (Chlorobium phaeobacteroides (strain DSM 266 / SMG 266 / 2430)).